The primary structure comprises 499 residues: NAD(P)H-quinone oxidoreductase chain 4, chloroplastic (499 aa).

14 helical membrane passes run 4–24, 31–51, 87–107, 113–133, 134–154, 167–187, 211–231, 242–262, 274–294, 310–330, 331–351, 385–405, 416–436, and 462–482; these read FPWL…IPFL, IIRW…TYIF, IGLI…AWPV, LFYF…ASQD, ILLF…LLAM, FILY…IMAF, IIIY…IPFH, HYST…YGLI, SFFA…AALT, VSHM…GLNG, AILQ…LAGI, SLAL…LGVI, IIII…LLSM, and IFIL…PNFV.

The protein belongs to the complex I subunit 4 family.

It localises to the plastid. It is found in the chloroplast thylakoid membrane. It carries out the reaction a plastoquinone + NADH + (n+1) H(+)(in) = a plastoquinol + NAD(+) + n H(+)(out). It catalyses the reaction a plastoquinone + NADPH + (n+1) H(+)(in) = a plastoquinol + NADP(+) + n H(+)(out). The sequence is that of NAD(P)H-quinone oxidoreductase chain 4, chloroplastic (ndhD) from Marchantia polymorpha (Common liverwort).